Consider the following 518-residue polypeptide: GMP synthase [glutamine-hydrolyzing] (518 aa).

The 193-residue stretch at 11-203 (SILVLDFGSQ…AFDVCQAEAN (193 aa)) folds into the Glutamine amidotransferase type-1 domain. The active-site Nucleophile is C88. Catalysis depends on residues H177 and E179. One can recognise a GMPS ATP-PPase domain in the interval 204–393 (WSMDDFIDMQ…LGMPSDLVWR (190 aa)). 231–237 (SGGVDSS) contacts ATP.

In terms of assembly, homodimer.

The enzyme catalyses XMP + L-glutamine + ATP + H2O = GMP + L-glutamate + AMP + diphosphate + 2 H(+). It functions in the pathway purine metabolism; GMP biosynthesis; GMP from XMP (L-Gln route): step 1/1. Functionally, catalyzes the synthesis of GMP from XMP. This is GMP synthase [glutamine-hydrolyzing] from Lactiplantibacillus plantarum (strain ATCC BAA-793 / NCIMB 8826 / WCFS1) (Lactobacillus plantarum).